The sequence spans 264 residues: tRNA pseudouridine synthase A (264 aa).

Asp51 acts as the Nucleophile in catalysis. A substrate-binding site is contributed by Tyr109.

Belongs to the tRNA pseudouridine synthase TruA family. As to quaternary structure, homodimer.

The enzyme catalyses uridine(38/39/40) in tRNA = pseudouridine(38/39/40) in tRNA. Functionally, formation of pseudouridine at positions 38, 39 and 40 in the anticodon stem and loop of transfer RNAs. This is tRNA pseudouridine synthase A from Vibrio atlanticus (strain LGP32) (Vibrio splendidus (strain Mel32)).